Here is a 292-residue protein sequence, read N- to C-terminus: Ephrin type-A receptor 4a (292 aa).

Residues 1-9 (IGIGEFGEV) and lysine 27 contribute to the ATP site. The Protein kinase domain occupies 1–265 (IGIGEFGEVC…QIVNMLDKLI (265 aa)). The Proton acceptor role is filled by aspartate 120. A Phosphotyrosine; by autocatalysis modification is found at tyrosine 153.

Belongs to the protein kinase superfamily. Tyr protein kinase family. Ephrin receptor subfamily. As to expression, widely expressed in the developing nervous system.

The protein localises to the cell membrane. It localises to the early endosome. The enzyme catalyses L-tyrosyl-[protein] + ATP = O-phospho-L-tyrosyl-[protein] + ADP + H(+). Its function is as follows. Receptor tyrosine kinase which binds membrane-bound ephrin family ligands residing on adjacent cells, leading to contact-dependent bidirectional signaling into neighboring cells. The signaling pathway downstream of the receptor is referred to as forward signaling while the signaling pathway downstream of the ephrin ligand is referred to as reverse signaling. Highly promiscuous, it has the unique property among Eph receptors to bind and to be physiologically activated by both GPI-anchored ephrin-A and transmembrane ephrin-B ligands including efna1 and efnb3. Upon activation by ephrin ligands, modulates cell morphology and integrin-dependent cell adhesion through regulation of the Rac, Rap and Rho GTPases activity. Plays an important role in the development of the nervous system controlling different steps of axonal guidance including the establishment of the corticospinal projections. The protein is Ephrin type-A receptor 4a (epha4a) of Danio rerio (Zebrafish).